Here is a 290-residue protein sequence, read N- to C-terminus: Signal recognition particle receptor FtsY (290 aa).

Residues 91–98 (GTNGSGKT), 173–177 (DTSGR), and 237–240 (TKVD) contribute to the GTP site.

Belongs to the GTP-binding SRP family. FtsY subfamily. Part of the signal recognition particle protein translocation system, which is composed of SRP and FtsY.

It localises to the cell inner membrane. The protein resides in the cytoplasm. It catalyses the reaction GTP + H2O = GDP + phosphate + H(+). Involved in targeting and insertion of nascent membrane proteins into the cytoplasmic membrane. Acts as a receptor for the complex formed by the signal recognition particle (SRP) and the ribosome-nascent chain (RNC). The polypeptide is Signal recognition particle receptor FtsY (Chlamydia pneumoniae (Chlamydophila pneumoniae)).